The chain runs to 126 residues: Holo-[acyl-carrier-protein] synthase (126 aa).

Residues Asp-9 and Glu-58 each coordinate Mg(2+).

The protein belongs to the P-Pant transferase superfamily. AcpS family. The cofactor is Mg(2+).

It localises to the cytoplasm. The enzyme catalyses apo-[ACP] + CoA = holo-[ACP] + adenosine 3',5'-bisphosphate + H(+). Transfers the 4'-phosphopantetheine moiety from coenzyme A to a Ser of acyl-carrier-protein. The chain is Holo-[acyl-carrier-protein] synthase from Salmonella agona (strain SL483).